A 223-amino-acid polypeptide reads, in one-letter code: Probable GTP-binding protein EngB (223 aa).

One can recognise an EngB-type G domain in the interval 25-199 (TGVEIAFAGR…SRLLQDWFDE (175 aa)). Residues 33–40 (GRSNAGKS), 60–64 (GRTQH), 78–81 (DLPG), 145–148 (TKAD), and 178–180 (FSS) contribute to the GTP site. Residues S40 and T62 each contribute to the Mg(2+) site.

It belongs to the TRAFAC class TrmE-Era-EngA-EngB-Septin-like GTPase superfamily. EngB GTPase family. Requires Mg(2+) as cofactor.

In terms of biological role, necessary for normal cell division and for the maintenance of normal septation. The polypeptide is Probable GTP-binding protein EngB (Nitrosomonas eutropha (strain DSM 101675 / C91 / Nm57)).